An 82-amino-acid chain; its full sequence is Small ribosomal subunit protein bS16 (82 aa).

Belongs to the bacterial ribosomal protein bS16 family.

This Aeromonas salmonicida (strain A449) protein is Small ribosomal subunit protein bS16.